A 490-amino-acid polypeptide reads, in one-letter code: GPI-anchored wall transfer protein 1 (490 aa).

Over 1 to 19 (MSTLKQRKEDFVTGLNGGS) the chain is Lumenal. Residues 20–40 (ITEINAVTSIALVTYISWNLL) traverse the membrane as a helical segment. Residues 41–54 (KNSNLMPPGISSVQ) lie on the Cytoplasmic side of the membrane. The chain crosses the membrane as a helical span at residues 55 to 75 (YIIDFALNWVALLLSITIYAS). Position 76 (glutamate 76) is a topological domain, lumenal. A helical membrane pass occupies residues 77–97 (PYLLNTLILLPCLLAFIYGKF). Topologically, residues 98 to 128 (TSSSKPSNPIYNKKKMITQRFQLEKKPYITA) are cytoplasmic. The helical transmembrane segment at 129–149 (YRGGMLILTAIAILAVDFPIF) threads the bilayer. Residues 150 to 157 (PRRFAKVE) lie on the Lumenal side of the membrane. A helical membrane pass occupies residues 158 to 178 (TWGTSLMDLGVGSFVFSNGIV). The Cytoplasmic portion of the chain corresponds to 179-199 (SSRALLKNLSLKSKPSFLKNA). Residues 200–220 (FNALKSGGTLLFLGLLRLFFV) form a helical membrane-spanning segment. At 221 to 231 (KNLEYQEHVTE) the chain is on the lumenal side. The helical transmembrane segment at 232-252 (YGVHWNFFITLSLLPLVLTFI) threads the bilayer. The Cytoplasmic portion of the chain corresponds to 253–257 (DPVTR). The helical transmembrane segment at 258–278 (MVPRCSIAIFISCIYEWLLLK) threads the bilayer. Topologically, residues 279–301 (DDRTLNFLILADRNCFFSANREG) are lumenal. Residues 302–322 (IFSFLGYCSIFLWGQNTGFYL) form a helical membrane-spanning segment. Over 323–356 (LGNKPTLNNLYKPSTQDVVAASKKSSTWDYWTSV) the chain is Cytoplasmic. The helical transmembrane segment at 357–377 (TPLSGLCIWSTIFLVISQLVF) threads the bilayer. Residues 378–390 (QYHPYSVSRRFAN) are Lumenal-facing. A helical membrane pass occupies residues 391-411 (LPYTLWVITYNLLFLTGYCLT). Topologically, residues 412–435 (DKIFGNSSEYYKVAECLESINSNG) are cytoplasmic. The chain crosses the membrane as a helical span at residues 436 to 456 (LFLFLLANVSTGLVNMSMVTI). The Lumenal segment spans residues 457–460 (DSSP). Residues 461–481 (LKSFLVLLAYCSFIAVISVFL) form a helical membrane-spanning segment. Topologically, residues 482–490 (YRKRIFIKL) are cytoplasmic.

The protein belongs to the PIGW family.

The protein resides in the endoplasmic reticulum membrane. It participates in glycolipid biosynthesis; glycosylphosphatidylinositol-anchor biosynthesis. Functionally, probable acetyltransferase, which acetylates the inositol ring of phosphatidylinositol during biosynthesis of GPI-anchor. Acetylation during GPI-anchor biosynthesis is not essential for the subsequent mannosylation and is usually removed soon after the attachment of GPIs to proteins. The polypeptide is GPI-anchored wall transfer protein 1 (GWT1) (Saccharomyces cerevisiae (strain ATCC 204508 / S288c) (Baker's yeast)).